The following is a 591-amino-acid chain: Probable auxin efflux carrier component 3b (591 aa).

Residues 1–6 are Extracellular-facing; sequence MISWHE. Residues 7–27 traverse the membrane as a helical segment; sequence LYMVLSAVVPLYVAMMVAYGS. The Cytoplasmic portion of the chain corresponds to 28–38; the sequence is VRWWGVLTPEQ. The chain crosses the membrane as a helical span at residues 39-59; sequence CSGINRFVAVIAVPLLSFHFI. Val-51 serves as a coordination point for (indol-3-yl)acetate. Topologically, residues 60-70 are extracellular; it reads SSSDPYAMNLR. A helical transmembrane segment spans residues 71-93; that stretch reads FVAADTLQKVLVLAALAAWSRFP. Residues 94–107 are Cytoplasmic-facing; it reads ARFVPPAWPPLDCS. A helical membrane pass occupies residues 108–128; it reads ITLFSVSTLPNTLVMGIPLLV. 2 residues coordinate (indol-3-yl)acetate: Asn-118 and Leu-120. Over 129-137 the chain is Extracellular; sequence SMYGPYSGD. The chain crosses the membrane as a helical span at residues 138-158; sequence LMVQIVVLQSIVWYTLLLFLF. Residue Tyr-151 participates in (indol-3-yl)acetate binding. Over 159–450 the chain is Cytoplasmic; it reads EFRAARVLIA…LIRNPNTYAS (292 aa). 2 stretches are compositionally biased toward polar residues: residues 243–254 and 283–292; these read SRNATPRGSTFT and SSSRQHTPRP. Disordered regions lie at residues 243–269, 283–313, 344–374, and 392–420; these read SRNA…SALR, SSSR…APTN, ETRR…GERA, and AGAK…RARG. Residues 395–407 show a composition bias toward low complexity; sequence KTEQQTTAVTTTT. Residues 451–471 form a helical membrane-spanning segment; the sequence is LIGLTWSLIAFRFHITMPIIV. At 472–474 the chain is on the extracellular side; it reads AKS. The helical transmembrane segment at 475–495 threads the bilayer; it reads ISILSDAGLGMAMFSLGLFMA. Residues 496–511 lie on the Cytoplasmic side of the membrane; sequence TQPKIIACGYSVAAAS. The chain crosses the membrane as a helical span at residues 512–532; the sequence is MGVRFFFGPAIMAAASAAVGI. At 533-535 the chain is on the extracellular side; it reads RGT. A helical transmembrane segment spans residues 536 to 556; it reads LLRIAIVQAALPQGIVPFVFA. 2 residues coordinate (indol-3-yl)acetate: Ile-550 and Val-551. Residues 557–568 are Cytoplasmic-facing; it reads KEYNLHATILCT. A helical membrane pass occupies residues 569–589; that stretch reads LVIFGMLIALPITLVYYIILG. The Extracellular segment spans residues 590-591; that stretch reads LL.

It belongs to the auxin efflux carrier (TC 2.A.69.1) family. Homodimer. As to expression, expressed in stem bases and leaves.

It is found in the membrane. In terms of biological role, may act as a component of the auxin efflux carrier. The chain is Probable auxin efflux carrier component 3b from Oryza sativa subsp. japonica (Rice).